Here is a 379-residue protein sequence, read N- to C-terminus: Cobalt-precorrin-5B C(1)-methyltransferase (379 aa).

The protein belongs to the CbiD family.

The catalysed reaction is Co-precorrin-5B + S-adenosyl-L-methionine = Co-precorrin-6A + S-adenosyl-L-homocysteine. The protein operates within cofactor biosynthesis; adenosylcobalamin biosynthesis; cob(II)yrinate a,c-diamide from sirohydrochlorin (anaerobic route): step 6/10. Functionally, catalyzes the methylation of C-1 in cobalt-precorrin-5B to form cobalt-precorrin-6A. This chain is Cobalt-precorrin-5B C(1)-methyltransferase, found in Citrobacter koseri (strain ATCC BAA-895 / CDC 4225-83 / SGSC4696).